Consider the following 335-residue polypeptide: MGRLILEHTLQGHKGRIWGVAWHPKGNVFASCGEDKAIRVWSLSGNTWSTKTILSDGHKRTIREIRWSPCGQYLASASFDATTAIWSKSSGEFECNATLEGHENEVKSVSWSRSGGLLATCSRDKSVWIWEVAGDDEFECAAVLNAHTQDVKRVVWHPTKDILASASYDNTIKMFAESQLDSDWDCTATLSSHTSTVWSIDFDAEGDRLVSCSDDKTLKIWRAYHPGNDAGIATPDKQSVWKCVCTLSGQHSRAIYDVSWCKLTGLIATGCGDDGIRIFKETSDSKRDEPTFEQLTAEETAHEQDVNAVEWNPAVAGQLISCSDDGTIKIWKVDD.

WD repeat units follow at residues G12 to K51, G57 to N96, G101 to C140, A146 to D185, S192 to G231, Q250 to E289, and A301 to D335.

The protein belongs to the WD repeat CIA1 family.

In terms of biological role, essential component of the cytosolic iron-sulfur (Fe/S) protein assembly machinery. Required for the maturation of extramitochondrial Fe/S proteins. The protein is Probable cytosolic iron-sulfur protein assembly protein Ciao1 of Drosophila pseudoobscura pseudoobscura (Fruit fly).